The chain runs to 392 residues: Putative non-inhibitory serpin-10 (392 aa).

The interval glycine 333–arginine 357 is RCL.

It belongs to the serpin family.

The chain is Putative non-inhibitory serpin-10 from Oryza sativa subsp. japonica (Rice).